The following is a 571-amino-acid chain: Septation ring formation regulator EzrA (571 aa).

Topologically, residues 1 to 3 are extracellular; it reads MYY. The chain crosses the membrane as a helical span at residues 4-22; that stretch reads MLIGFIIVVIAVIGAGYIL. Over 23–571 the chain is Cytoplasmic; sequence KRKHYQRINE…ESKVSVDDIE (549 aa). Coiled-coil stretches lie at residues 248–298, 326–374, 400–437, and 478–529; these read LAQM…DTLE, DALA…ASGE, KFAE…ERER, and RIAE…ENHF.

Belongs to the EzrA family.

The protein resides in the cell membrane. Its function is as follows. Negative regulator of FtsZ ring formation; modulates the frequency and position of FtsZ ring formation. Inhibits FtsZ ring formation at polar sites. Interacts either with FtsZ or with one of its binding partners to promote depolymerization. The chain is Septation ring formation regulator EzrA from Listeria monocytogenes serovar 1/2a (strain ATCC BAA-679 / EGD-e).